Reading from the N-terminus, the 257-residue chain is Imidazole glycerol phosphate synthase subunit HisF (257 aa).

Residues Asp-11 and Asp-130 contribute to the active site.

The protein belongs to the HisA/HisF family. In terms of assembly, heterodimer of HisH and HisF.

The protein localises to the cytoplasm. The enzyme catalyses 5-[(5-phospho-1-deoxy-D-ribulos-1-ylimino)methylamino]-1-(5-phospho-beta-D-ribosyl)imidazole-4-carboxamide + L-glutamine = D-erythro-1-(imidazol-4-yl)glycerol 3-phosphate + 5-amino-1-(5-phospho-beta-D-ribosyl)imidazole-4-carboxamide + L-glutamate + H(+). It functions in the pathway amino-acid biosynthesis; L-histidine biosynthesis; L-histidine from 5-phospho-alpha-D-ribose 1-diphosphate: step 5/9. IGPS catalyzes the conversion of PRFAR and glutamine to IGP, AICAR and glutamate. The HisF subunit catalyzes the cyclization activity that produces IGP and AICAR from PRFAR using the ammonia provided by the HisH subunit. The chain is Imidazole glycerol phosphate synthase subunit HisF from Shewanella loihica (strain ATCC BAA-1088 / PV-4).